The chain runs to 364 residues: Alanine racemase (364 aa).

The active-site Proton acceptor; specific for D-alanine is Lys-34. N6-(pyridoxal phosphate)lysine is present on Lys-34. Arg-129 is a substrate binding site. Tyr-259 (proton acceptor; specific for L-alanine) is an active-site residue. A substrate-binding site is contributed by Met-307.

It belongs to the alanine racemase family. It depends on pyridoxal 5'-phosphate as a cofactor.

The catalysed reaction is L-alanine = D-alanine. It participates in amino-acid biosynthesis; D-alanine biosynthesis; D-alanine from L-alanine: step 1/1. Functionally, catalyzes the interconversion of L-alanine and D-alanine. May also act on other amino acids. The chain is Alanine racemase (alr) from Coxiella burnetii (strain CbuK_Q154) (Coxiella burnetii (strain Q154)).